Here is a 369-residue protein sequence, read N- to C-terminus: Peptide chain release factor subunit 1 (369 aa).

Belongs to the eukaryotic release factor 1 family. As to quaternary structure, heterodimer of two subunits, one of which binds GTP.

It is found in the cytoplasm. In terms of biological role, directs the termination of nascent peptide synthesis (translation) in response to the termination codons UAA, UAG and UGA. The sequence is that of Peptide chain release factor subunit 1 (prf1) from Saccharolobus solfataricus (strain ATCC 35092 / DSM 1617 / JCM 11322 / P2) (Sulfolobus solfataricus).